The primary structure comprises 856 residues: Structure-specific endonuclease subunit SLX4 (856 aa).

Over residues 1-19 (MDNAAIASQSNTPPSNGRS) the composition is skewed to polar residues. 9 disordered regions span residues 1 to 24 (MDNA…ARFV), 39 to 61 (IEPS…SKSP), 88 to 121 (VDSP…HKMA), 139 to 201 (KTRK…TDNE), 296 to 326 (GIQT…KKPQ), 362 to 392 (KKMG…GNGP), 621 to 640 (SKSS…SQGD), 653 to 688 (RSDS…SNEG), and 715 to 742 (DSVG…QDCD). Over residues 51 to 60 (STLLTSLSKS) the composition is skewed to low complexity. Basic residues predominate over residues 139–152 (KTRKKKAATAKRTR). Residues 296–309 (GIQTPTESRPATND) show a composition bias toward polar residues. Over residues 673 to 686 (SVKSQESKSFSLSN) the composition is skewed to polar residues.

The protein belongs to the SLX4 family. As to quaternary structure, forms a heterodimer with SLX1. Phosphorylated in response to DNA damage.

The protein localises to the nucleus. Regulatory subunit of the SLX1-SLX4 structure-specific endonuclease that resolves DNA secondary structures generated during DNA repair and recombination. Has endonuclease activity towards branched DNA substrates, introducing single-strand cuts in duplex DNA close to junctions with ss-DNA. This is Structure-specific endonuclease subunit SLX4 from Ajellomyces dermatitidis (strain ER-3 / ATCC MYA-2586) (Blastomyces dermatitidis).